The sequence spans 390 residues: MRADAPATDGLDEAARARILAKAALFAPPSNELADGRRDLVGLSREELAAAMAEIGEQPFRAKQLWHWIYHQGVTDFAAMANIAKPLRAKLAERFAIGRPEVAADHLSADETRKMLFRFRDHEAVETVYIPDVTEDRGAVCLSSQVGCTLSCRFCHTGTQRLTRNLSAAEIVGQFMAMRDAYGEWPSPKGETPRLLSTIVLMGMGEPLYNYENVAKAMKIVMDGEGIGLSRRRITLSTSGVVPMMDRAGAELGVNLAVSLHAVTDDVRDVIVPLNRKYNIAELIAACRRYPGASNARRITFEYVMLKGINDSEADARRLVELIDGIPAKVNLIPFNPWPGSTYETSSGNAIRRFANIVMDAGYAAPVRTPRGQDILAACGQLKSKVAGAA.

Glu126 (proton acceptor) is an active-site residue. The region spanning 134–374 (TEDRGAVCLS…APVRTPRGQD (241 aa)) is the Radical SAM core domain. Cys141 and Cys379 are joined by a disulfide. Cys148, Cys152, and Cys155 together coordinate [4Fe-4S] cluster. Residues 205–206 (GE), Ser237, 259–261 (SLH), and Asn336 contribute to the S-adenosyl-L-methionine site. Residue Cys379 is the S-methylcysteine intermediate of the active site.

This sequence belongs to the radical SAM superfamily. RlmN family. [4Fe-4S] cluster is required as a cofactor.

The protein resides in the cytoplasm. The enzyme catalyses adenosine(2503) in 23S rRNA + 2 reduced [2Fe-2S]-[ferredoxin] + 2 S-adenosyl-L-methionine = 2-methyladenosine(2503) in 23S rRNA + 5'-deoxyadenosine + L-methionine + 2 oxidized [2Fe-2S]-[ferredoxin] + S-adenosyl-L-homocysteine. The catalysed reaction is adenosine(37) in tRNA + 2 reduced [2Fe-2S]-[ferredoxin] + 2 S-adenosyl-L-methionine = 2-methyladenosine(37) in tRNA + 5'-deoxyadenosine + L-methionine + 2 oxidized [2Fe-2S]-[ferredoxin] + S-adenosyl-L-homocysteine. Its function is as follows. Specifically methylates position 2 of adenine 2503 in 23S rRNA and position 2 of adenine 37 in tRNAs. m2A2503 modification seems to play a crucial role in the proofreading step occurring at the peptidyl transferase center and thus would serve to optimize ribosomal fidelity. The chain is Dual-specificity RNA methyltransferase RlmN from Acidiphilium cryptum (strain JF-5).